Reading from the N-terminus, the 329-residue chain is Alpha/beta hydrolase domain-containing protein 17C (329 aa).

A disordered region spans residues 46 to 85; the sequence is APEQRGPGAPAPASAASTSSASAAAQPAPQQPEEGGAGPG. Low complexity predominate over residues 51–79; it reads GPGAPAPASAASTSSASAAAQPAPQQPEE. Residues Ser211, Asp276, and His305 each act as charge relay system in the active site.

The protein belongs to the AB hydrolase superfamily. ABHD17 family. Palmitoylated on cysteine residues located in a cysteine cluster at the N-terminus which promotes membrane localization. Palmitoylation is required for post-synaptic localization and for depalmitoylating activity towards DLG4/PSD95.

It is found in the recycling endosome membrane. The protein resides in the cell projection. It localises to the dendritic spine. The protein localises to the postsynaptic density membrane. The enzyme catalyses S-hexadecanoyl-L-cysteinyl-[protein] + H2O = L-cysteinyl-[protein] + hexadecanoate + H(+). In terms of biological role, hydrolyzes fatty acids from S-acylated cysteine residues in proteins. Has depalmitoylating activity towards NRAS and DLG4/PSD95. The protein is Alpha/beta hydrolase domain-containing protein 17C of Bos taurus (Bovine).